A 423-amino-acid polypeptide reads, in one-letter code: Glycine-rich protein 1 (423 aa).

A signal peptide spans 1-20 (MKKICLTFVFLLSLFPIYSS). Disordered regions lie at residues 28 to 47 (TIES…AGPA), 78 to 133 (DDDN…SKKN), 159 to 219 (KGGS…GAGA), and 236 to 288 (GASA…ASAG). Residues 31 to 42 (SGSSKSSGSSVG) show a composition bias toward low complexity. Basic and acidic residues-rich tracts occupy residues 81-93 (NKDK…DGKT) and 102-111 (QNGDDVKSDN). The segment covering 159-172 (KGGSANNGGEGGAT) has biased composition (gly residues). Low complexity predominate over residues 173–183 (SAGSAGATSGA). Composition is skewed to gly residues over residues 205-219 (GAGG…GAGA) and 236-247 (GASAGAGAGGAQ). A compositionally biased stretch (low complexity) spans 248–284 (GDAEAASAGSTAGSTSSGGAAASGASSGAGSSDSGQG).

Nacreous layer of shell (at protein level).

The protein resides in the secreted. This is Glycine-rich protein 1 from Pinctada maxima (Silver-lipped pearl oyster).